Reading from the N-terminus, the 333-residue chain is ATP synthase subunit a (333 aa).

The signal sequence occupies residues 1-32; it reads MIYLHNKRKGMLKRLSALIVIGLLMNLPAVFA. Helical transmembrane passes span 100-120, 161-181, 185-205, 229-249, 254-274, 279-299, and 300-320; these read HVVM…GVGN, FMPF…IGLV, ATAT…FLVT, LMWI…PFAL, FANM…IFVF, IAPV…LVAF, and LQAY…VAHE.

The protein belongs to the ATPase A chain family. F-type ATPases have 2 components, CF(1) - the catalytic core - and CF(0) - the membrane proton channel. CF(1) has five subunits: alpha(3), beta(3), gamma(1), delta(1), epsilon(1). CF(0) has four main subunits: a, b, b' and c.

It localises to the cell inner membrane. Functionally, key component of the proton channel; it plays a direct role in the translocation of protons across the membrane. This Chloroherpeton thalassium (strain ATCC 35110 / GB-78) protein is ATP synthase subunit a.